A 198-amino-acid chain; its full sequence is RNA 2',3'-cyclic phosphodiesterase (198 aa).

The active-site Proton donor is the histidine 39. 2 short sequence motifs (HXTX) span residues histidine 39–leucine 42 and histidine 130–leucine 133. The Proton acceptor role is filled by histidine 130.

Belongs to the 2H phosphoesterase superfamily. ThpR family.

The catalysed reaction is a 3'-end 2',3'-cyclophospho-ribonucleotide-RNA + H2O = a 3'-end 2'-phospho-ribonucleotide-RNA + H(+). Its function is as follows. Hydrolyzes RNA 2',3'-cyclic phosphodiester to an RNA 2'-phosphomonoester. The protein is RNA 2',3'-cyclic phosphodiesterase of Thermus thermophilus (strain ATCC 27634 / DSM 579 / HB8).